A 562-amino-acid chain; its full sequence is Protein wntless (562 aa).

The Cytoplasmic portion of the chain corresponds to 1–13 (MSGTILENLSGRK). Residues 14-34 (LSILVSSLLLCQVACFLIGGL) traverse the membrane as a helical segment. Over 35 to 239 (YAPVPAGHQI…AIHQNGGFTQ (205 aa)) the chain is Lumenal. Residues Asn-58 and Asn-103 are each glycosylated (N-linked (GlcNAc...) asparagine). The helical transmembrane segment at 240-260 (VWLLLKSVLFPFIIGIMVWFW) threads the bilayer. The Cytoplasmic segment spans residues 261–270 (RRVHILQRSP). Residues 271-291 (ALLEYMLLYLGGALSFLNLPL) traverse the membrane as a helical segment. The Lumenal segment spans residues 292–311 (EYLTLSFEMPYMLLLSDVRQ). Residues 312–332 (GIFYAMLLSFWLVFAGEHMLI) form a helical membrane-spanning segment. Topologically, residues 333–344 (QDSPNKSTIRSR) are cytoplasmic. Residues 345-365 (YWKHLSAVVVGCISLFVFDIC) traverse the membrane as a helical segment. Over 366-390 (ERGMQLRNPFYSIWTTPLGAKVAMS) the chain is Lumenal. A helical transmembrane segment spans residues 391–411 (FIVLAGVSAGIYFLFLCYMVW). Residues 412 to 441 (KVFKDIGDKRTSLPSMSQARRLHYEGLIYR) are Cytoplasmic-facing. Residues 442 to 462 (FKFLMLATLLCAGLTVAGFIM) form a helical membrane-spanning segment. Residues 463 to 482 (GQMAEGHWKWNEDIEIQLTS) lie on the Lumenal side of the membrane. A helical transmembrane segment spans residues 483–503 (AFLTGVYGMWNIYIFALLILY). Residues 504-562 (APSHKQWPTMRHSDETTQSNENIVASAASEEIEFSNLPSDSNPSEISSLTSFTRKVAFD) lie on the Cytoplasmic side of the membrane. Positions 538–562 (SNLPSDSNPSEISSLTSFTRKVAFD) are disordered. Positions 539 to 556 (NLPSDSNPSEISSLTSFT) are enriched in polar residues.

This sequence belongs to the wntless family. In terms of assembly, interacts with wg; in the Golgi. Interacts with Vps35, a component of the retromer complex; wls stability is regulated by Vps35.

It is found in the presynaptic cell membrane. The protein localises to the postsynaptic cell membrane. Its subcellular location is the cell membrane. It localises to the endoplasmic reticulum membrane. The protein resides in the endosome membrane. It is found in the golgi apparatus membrane. Its function is as follows. A segment polarity gene required for wingless (wg)-dependent patterning processes, acting in both wg-sending cells and wg-target cells. In non-neuronal cells wls directs wg secretion. The wls traffic loop encompasses the Golgi, the cell surface, an endocytic compartment and a retrograde route leading back to the Golgi, and involves clathrin-mediated endocytosis and the retromer complex (a conserved protein complex consisting of Vps35 and Vps26). In neuronal cells (the larval motorneuron NMJ), the wg signal moves across the synapse via the release of wls-containing exosome-like vesicles. Postsynaptic wls is required for the trafficking of fz2 through the fz2-interacting protein Grip. This chain is Protein wntless, found in Drosophila mojavensis (Fruit fly).